A 141-amino-acid chain; its full sequence is Hemoglobin subunit beta-C(NA) (141 aa).

Residues Pro-1–His-141 form the Globin domain. His-58 and His-87 together coordinate heme b.

It belongs to the globin family. As to quaternary structure, heterotetramer of two alpha chains and two beta chains. Red blood cells.

Its function is as follows. Involved in oxygen transport from the lung to the various peripheral tissues. This chain is Hemoglobin subunit beta-C(NA), found in Ammotragus lervia (Barbary sheep).